The chain runs to 91 residues: Soluble cytochrome b558 (91 aa).

Residues L8–E88 enclose the Cytochrome b5 heme-binding domain. Cysteines 25 and 54 form a disulfide. Residues H43 and H71 each contribute to the heme site.

In Ectothiorhodospira shaposhnikovii (Ectothiorhodospira vacuolata), this protein is Soluble cytochrome b558.